A 95-amino-acid polypeptide reads, in one-letter code: Toxin Tbo-IT2 (95 aa).

An N-terminal signal peptide occupies residues 1-23; it reads MTMKTLCLSLIVIGVLILVAVKA. A propeptide spanning residues 24–53 is cleaved from the precursor; the sequence is EDYVNINSLEEAPEENVNINNLEETPEESR. 5 disulfides stabilise this stretch: cysteine 54/cysteine 68, cysteine 61/cysteine 73, cysteine 67/cysteine 84, cysteine 70/cysteine 92, and cysteine 75/cysteine 82. Cysteine 92 carries the cysteine amide modification.

This sequence belongs to the neurotoxin 02 (plectoxin) family. 02 (plectoxin) subfamily. In terms of tissue distribution, expressed by the venom gland.

It localises to the secreted. In terms of biological role, this recombinant (non-amidated) toxin shows insecticidal activity on larvae of the housefly Musca domestica and has no activity on a panel of expressed neuronal receptors and ion channels. The sequence is that of Toxin Tbo-IT2 from Tibellus oblongus (Oblong running crab spider).